The primary structure comprises 565 residues: Beta-hexosaminidase subunit beta (565 aa).

The signal sequence occupies residues 1–13 (MIVLLLLISYCFA). Asn-71 carries an N-linked (GlcNAc...) asparagine glycan. Residue Glu-347 is the Proton donor of the active site.

Belongs to the glycosyl hydrolase 20 family. As to quaternary structure, heterodimer of one alpha subunit and one beta subunit. In terms of processing, glycosylated.

The protein resides in the cytoplasmic granule. It is found in the secreted. It catalyses the reaction Hydrolysis of terminal non-reducing N-acetyl-D-hexosamine residues in N-acetyl-beta-D-hexosaminides.. Functionally, hydrolyzes the non-reducing end N-acetyl-D-hexosamine and/or sulfated N-acetyl-D-hexosamine of glycoconjugates. May contribute to amoebic pathogenicity and may be involved in the destruction of extracellular matrix components. This is Beta-hexosaminidase subunit beta from Entamoeba histolytica (strain ATCC 30459 / HM-1:IMSS / ABRM).